A 160-amino-acid polypeptide reads, in one-letter code: Protein-export protein SecB (160 aa).

The protein belongs to the SecB family. Homotetramer, a dimer of dimers. One homotetramer interacts with 1 SecA dimer.

The protein localises to the cytoplasm. Functionally, one of the proteins required for the normal export of preproteins out of the cell cytoplasm. It is a molecular chaperone that binds to a subset of precursor proteins, maintaining them in a translocation-competent state. It also specifically binds to its receptor SecA. The protein is Protein-export protein SecB of Azorhizobium caulinodans (strain ATCC 43989 / DSM 5975 / JCM 20966 / LMG 6465 / NBRC 14845 / NCIMB 13405 / ORS 571).